We begin with the raw amino-acid sequence, 115 residues long: Large ribosomal subunit protein uL18 (115 aa).

Residues 1–20 (MKYTKQEARKRRHYRVRSKV) are disordered. Positions 8-18 (ARKRRHYRVRS) are enriched in basic residues.

This sequence belongs to the universal ribosomal protein uL18 family. Part of the 50S ribosomal subunit; part of the 5S rRNA/L5/L18/L25 subcomplex. Contacts the 5S and 23S rRNAs.

In terms of biological role, this is one of the proteins that bind and probably mediate the attachment of the 5S RNA into the large ribosomal subunit, where it forms part of the central protuberance. This is Large ribosomal subunit protein uL18 from Mesoplasma florum (strain ATCC 33453 / NBRC 100688 / NCTC 11704 / L1) (Acholeplasma florum).